The chain runs to 418 residues: MAKLLQSPPKFLPAEWYIANKSQYHRAEAQRSRSERLVAESQRLVEEIEKTTRKSQSDVNKKLEQRLEEVKFWKKELDDKLEHLVNETEDLLTYKIRLERSLESYKEPLHITEKCLAYREKRVGIDLVHDVVDQELQKEADIIHGVMNLLTRTVEEATEQIRLNRSAKYNLEKDLKDKFTAITIDDICFSLNNNSPDIKYSENVVRIEPNSVSLEDWLDFSNTNMQKADKQLNNSMALKTLVDQILSQTANDLRRQCEVVDTAFVNGLKETKDARNKLADHLAKVMDEIASQEKNIEVLENAITQQEGPAKVAHTRLENRTYRPNVELCRDVAQYRLIREVQEIKHNVARLEETLAQAQIQLKALFRRQLALQEEIQVKENTIYIDQVLCMEMRKSIPPRDGDDHGAWEGGIRAEAIC.

Coiled coils occupy residues 20-107, 134-177, 266-308, and 332-383; these read NKSQ…SYKE, QELQ…DLKD, NGLK…QQEG, and VAQY…ENTI.

The protein belongs to the tektin family. Microtubule inner protein component of sperm flagellar doublet microtubules. Post-translationally, ubiquitinated, leading to its degradation. Deubiquitinated by USP16, promoting its stability. In terms of tissue distribution, predominantly expressed in testis.

The protein localises to the cytoplasm. The protein resides in the cytoskeleton. It is found in the cilium axoneme. Its subcellular location is the flagellum axoneme. Microtubule inner protein (MIP) part of the dynein-decorated doublet microtubules (DMTs) in cilia and flagellar axoneme. Forms filamentous polymers in the walls of ciliary and flagellar microtubules. This Rattus norvegicus (Rat) protein is Tektin-1 (Tekt1).